Reading from the N-terminus, the 173-residue chain is ATP-dependent protease subunit HslV (173 aa).

T2 is an active-site residue. Positions 158, 161, and 164 each coordinate Na(+).

This sequence belongs to the peptidase T1B family. HslV subfamily. As to quaternary structure, a double ring-shaped homohexamer of HslV is capped on each side by a ring-shaped HslU homohexamer. The assembly of the HslU/HslV complex is dependent on binding of ATP.

The protein localises to the cytoplasm. It carries out the reaction ATP-dependent cleavage of peptide bonds with broad specificity.. Its activity is regulated as follows. Allosterically activated by HslU binding. In terms of biological role, protease subunit of a proteasome-like degradation complex believed to be a general protein degrading machinery. This Mannheimia succiniciproducens (strain KCTC 0769BP / MBEL55E) protein is ATP-dependent protease subunit HslV.